We begin with the raw amino-acid sequence, 875 residues long: Alanine--tRNA ligase (875 aa).

Residues H564, H568, C666, and H670 each coordinate Zn(2+).

It belongs to the class-II aminoacyl-tRNA synthetase family. Homotetramer. Zn(2+) serves as cofactor.

It localises to the cytoplasm. The catalysed reaction is tRNA(Ala) + L-alanine + ATP = L-alanyl-tRNA(Ala) + AMP + diphosphate. In terms of biological role, catalyzes the attachment of alanine to tRNA(Ala) in a two-step reaction: alanine is first activated by ATP to form Ala-AMP and then transferred to the acceptor end of tRNA(Ala). Also edits incorrectly charged Ser-tRNA(Ala) and Gly-tRNA(Ala) via its editing domain. The polypeptide is Alanine--tRNA ligase (Yersinia pestis bv. Antiqua (strain Angola)).